A 138-amino-acid chain; its full sequence is Acidic phospholipase A2 2 (138 aa).

Residues 1-16 (MRTLWIVAVWLTGVEG) form the signal peptide. Disulfide bonds link Cys42/Cys131, Cys44/Cys60, Cys59/Cys111, Cys65/Cys138, Cys66/Cys104, Cys73/Cys97, and Cys91/Cys102. 3 residues coordinate Ca(2+): Tyr43, Gly45, and Gly47. His63 is a catalytic residue. Asp64 is a Ca(2+) binding site. Asp105 is an active-site residue.

In terms of assembly, monomer. The cofactor is Ca(2+). In terms of tissue distribution, expressed by the venom gland.

The protein resides in the secreted. It catalyses the reaction a 1,2-diacyl-sn-glycero-3-phosphocholine + H2O = a 1-acyl-sn-glycero-3-phosphocholine + a fatty acid + H(+). Its function is as follows. Snake venom phospholipase that inhibits ADP- and collagen-induced human platelet aggregation. This inhibition is completely inhibited by abolition of catalytic activity in case of collagen as inducer and partially inhibited in case of ADP as inducer. PLA2 catalyzes the calcium-dependent hydrolysis of the 2-acyl groups in 3-sn-phosphoglycerides. The protein is Acidic phospholipase A2 2 of Macrovipera lebetinus (Levantine viper).